A 28-amino-acid chain; its full sequence is Trypsin inhibitor 2 (28 aa).

Disulfide bonds link Cys3–Cys20, Cys10–Cys22, and Cys16–Cys27.

Belongs to the protease inhibitor I7 (squash-type serine protease inhibitor) family.

Its subcellular location is the secreted. Inhibits trypsin. This chain is Trypsin inhibitor 2, found in Momordica charantia (Bitter gourd).